The sequence spans 208 residues: Small ribosomal subunit protein uS4 (208 aa).

Positions 98-161 (RRLDNVVYRM…KSNPQVVRAM (64 aa)) constitute an S4 RNA-binding domain.

The protein belongs to the universal ribosomal protein uS4 family. Part of the 30S ribosomal subunit. Contacts protein S5. The interaction surface between S4 and S5 is involved in control of translational fidelity.

Functionally, one of the primary rRNA binding proteins, it binds directly to 16S rRNA where it nucleates assembly of the body of the 30S subunit. With S5 and S12 plays an important role in translational accuracy. The protein is Small ribosomal subunit protein uS4 of Helicobacter acinonychis (strain Sheeba).